Here is a 240-residue protein sequence, read N- to C-terminus: Protein OPG176 (240 aa).

The protein belongs to the orthopoxvirus OPG176 family. As to quaternary structure, tetramer. Interacts with host MYD88, TRF4, TICAM2 and MAL.

Its function is as follows. BCL2-like protein which disrupts the host immune response by inhibiting the TLR4 signaling pathway leading to NF-kappa-B activation. Acts close to the plasma membrane and targets several host TIR-domain containing adapter proteins including MYD88, TIRAP, TRIF and TICAM2. In turn, blocks the host NF-kappa-B and TRIF-mediated IRF3 activation. The protein is Protein OPG176 (OPG176) of Cynomys gunnisoni (Gunnison's prairie dog).